We begin with the raw amino-acid sequence, 318 residues long: 3'-5' exoribonuclease YhaM (318 aa).

In terms of domain architecture, HD spans 163-279 (HVVSMLDLAK…LHYIDNLDAK (117 aa)).

The protein belongs to the YhaM family.

Its function is as follows. Shows a 3'-5' exoribonuclease activity. In Bacillus cytotoxicus (strain DSM 22905 / CIP 110041 / 391-98 / NVH 391-98), this protein is 3'-5' exoribonuclease YhaM.